Reading from the N-terminus, the 548-residue chain is Uridine-cytidine kinase-like 1 (548 aa).

The segment covering methionine 1–alanine 18 has biased composition (low complexity). A disordered region spans residues methionine 1–threonine 74. 2 positions are modified to phosphoserine: serine 56 and serine 63. Glycine 105–threonine 112 lines the ATP pocket. At serine 539 the chain carries Phosphoserine.

This sequence belongs to the uridine kinase family. In terms of assembly, interacts with RNF19B. Ubiquitinated by RNF19B; which induces proteasomal degradation.

The protein resides in the cytoplasm. Its subcellular location is the nucleus. The enzyme catalyses uridine + ATP = UMP + ADP + H(+). It carries out the reaction cytidine + ATP = CMP + ADP + H(+). The protein operates within pyrimidine metabolism; UMP biosynthesis via salvage pathway; UMP from uridine: step 1/1. Its function is as follows. May contribute to UTP accumulation needed for blast transformation and proliferation. This Mus musculus (Mouse) protein is Uridine-cytidine kinase-like 1 (Uckl1).